Reading from the N-terminus, the 847-residue chain is A-kinase anchor protein 4 (847 aa).

The propeptide occupies 1–187; the sequence is MIAYCGTTKM…MAASKNTNNN (187 aa). Phosphoserine is present on residues serine 95, serine 129, serine 189, and serine 203. The span at 182–204 shows a compositional bias: polar residues; that stretch reads KNTNNNQSPSNPATKSPSNQRSV. The interval 182–209 is disordered; sequence KNTNNNQSPSNPATKSPSNQRSVATPDG. Residue threonine 206 is modified to Phosphothreonine. 3 positions are modified to phosphoserine: serine 212, serine 225, and serine 270. Residues 218 to 231 form an interaction with Prkar1a and Prkar2a region; sequence YYVNRLSSLVIQMA. Residue tyrosine 300 is modified to Phosphotyrosine. Phosphoserine is present on residues serine 301, serine 304, serine 340, serine 430, serine 441, serine 443, serine 462, serine 491, serine 496, and serine 503. Residues 334-343 form a PKA-RI subunit binding domain region; sequence YANQVASDMM. Position 505 is a phosphothreonine (threonine 505). Residues 511–536 form a disordered region; the sequence is KQGTQGRVPNKVCPSKDEKREKISPS. The span at 524–533 shows a compositional bias: basic and acidic residues; sequence PSKDEKREKI. Residues serine 536 and serine 581 each carry the phosphoserine modification. Positions 583 to 613 are disordered; sequence QYEKSGGGQSSKSLSMKHFESRGAPGPSTCA. Phosphoserine is present on residues serine 626, serine 631, serine 648, serine 650, serine 674, serine 677, serine 700, and serine 729. The disordered stretch occupies residues 655–677; it reads CCDSRSKQAAPVAKRPEDQSQDS.

Belongs to the AKAP110 family. In terms of assembly, interacts with PRKAR1A and PRKAR2A. Interacts with ENO4. Interacts with QRICH2. Phosphorylated by STK33 during sperm flagella assembly. In terms of tissue distribution, expressed in flagella of epididymal sperm.

The protein resides in the cell projection. It localises to the cilium. The protein localises to the flagellum. In terms of biological role, major structural component of sperm fibrous sheath. May play a role in sperm motility. This is A-kinase anchor protein 4 from Rattus norvegicus (Rat).